The sequence spans 665 residues: RNA-directed RNA polymerase (665 aa).

In terms of domain architecture, RdRp catalytic spans 310 to 485 (NKEEKVKEWS…LKEGKVNPSP (176 aa)). Residues aspartate 454, tyrosine 491, and glycine 495 each contribute to the Mg(2+) site.

In terms of assembly, part of the packaging complex composed of RDRP, P4 and P7. Interacts with P7. Mg(2+) serves as cofactor. It depends on Mn(2+) as a cofactor.

The protein localises to the virion. The catalysed reaction is RNA(n) + a ribonucleoside 5'-triphosphate = RNA(n+1) + diphosphate. Rna-dependent RNA polymerase part of the packaging complex that packages the viral RNA segments, replicate them into a double-stranded form and transcribe them. The polypeptide is RNA-directed RNA polymerase (P2) (Pseudomonas phage phi6 (Bacteriophage phi-6)).